The following is a 107-amino-acid chain: Insulin-like peptide 6 (107 aa).

Residues Met1–Ala33 form the signal peptide. Cystine bridges form between Cys48–Cys91, Cys60–Cys105, and Cys90–Cys96. The propeptide at Leu67–Gly76 is connecting peptide.

The protein belongs to the insulin family. As to quaternary structure, heterodimer of a B chain and an A chain linked by two disulfide bonds. As to expression, expressed at a low level in the larval gut.

It is found in the secreted. Its function is as follows. Possible ligand of InR/insulin-like receptor. The chain is Insulin-like peptide 6 from Drosophila melanogaster (Fruit fly).